The primary structure comprises 727 residues: Ankyrin repeat domain-containing protein 6 (727 aa).

8 ANK repeats span residues 9–38, 41–70, 74–103, 107–136, 140–169, 173–202, 206–235, and 239–268; these read ALSE…RVAV, HGRT…DLDV, GDQT…ALDR, DGNT…NVLA, AGNT…RADL, AGDT…SVHE, AGDT…DTTI, and AGQT…VLRF. The tract at residues 277-386 is disordered; that stretch reads KRERLKEERR…HRCSSPPPPH (110 aa). Basic and acidic residues predominate over residues 280–296; the sequence is RLKEERRAQSVPRDEVA. A compositionally biased stretch (polar residues) spans 298–312; it reads SKGSVSAGDTPSSEQ. Residues 314 to 324 are compositionally biased toward basic and acidic residues; the sequence is VARKEEAREEF. A compositionally biased stretch (basic residues) spans 363–379; sequence KNLHAHNHPKKRNRHRC. The stretch at 417–446 forms a coiled coil; sequence LINKLENQLEATVEEIKAELGSVQDKMNTK. Positions 548-557 are enriched in low complexity; sequence PAAASDSSPP. Disordered regions lie at residues 548 to 586 and 601 to 657; these read PAAA…CTGS and NEAA…TGPH. Polar residues predominate over residues 566 to 584; it reads LNSTATQRLQQELSSSDCT. Residues 622–633 show a composition bias toward basic residues; that stretch reads KSGKSGPTRHRA. A coiled-coil region spans residues 682 to 727; that stretch reads WYERKIEEARSQANQKAQQDKATLKEHIKSLEEELAKLRTRVQKEN.

In terms of assembly, interacts with AXN1, AXN2 and CSNK1E/CKI-epsilon.

Recruits CKI-epsilon to the beta-catenin degradation complex that consists of AXN1 or AXN2 and GSK3-beta and allows efficient phosphorylation of beta-catenin, thereby inhibiting beta-catenin/Tcf signals. The protein is Ankyrin repeat domain-containing protein 6 (ANKRD6) of Homo sapiens (Human).